The following is a 459-amino-acid chain: Cysteine--tRNA ligase (459 aa).

Residue Cys28 coordinates Zn(2+). The 'HIGH' region motif lies at 30–40; the sequence is VTIYDLCHIGH. Positions 209, 234, and 238 each coordinate Zn(2+). The 'KMSKS' region signature appears at 266-270; it reads KMSKS. Residue Lys269 participates in ATP binding.

This sequence belongs to the class-I aminoacyl-tRNA synthetase family. In terms of assembly, monomer. Zn(2+) is required as a cofactor.

It is found in the cytoplasm. It carries out the reaction tRNA(Cys) + L-cysteine + ATP = L-cysteinyl-tRNA(Cys) + AMP + diphosphate. This chain is Cysteine--tRNA ligase, found in Shewanella baltica (strain OS223).